A 316-amino-acid polypeptide reads, in one-letter code: Apolipoprotein E (316 aa).

Positions 1–18 (MKVLWVALVVALLAGCQA) are cleaved as a signal peptide. 8 repeat units span residues 79 to 100 (VLME…GQLA), 101 to 122 (PMAQ…ARLG), 123 to 144 (SDME…AMLG), 145 to 166 (QSTE…KRLL), 167 to 188 (RDAD…EGAE), 189 to 210 (RSVS…SRAA), 211 to 232 (TLST…QKLH), and 233 to 254 (GRLE…QQLE). An 8 X 22 AA approximate tandem repeats region spans residues 79 to 254 (VLMEETMKEV…RLDKMRQQLE (176 aa)). M142 carries the methionine sulfoxide modification. Residue S146 is modified to Phosphoserine. Positions 157–167 (HLRKLRKRLLR) are LDL and other lipoprotein receptors binding. 161–164 (LRKR) is a heparin binding site. Residues 209 to 289 (AATLSTQVGQ…SWFEPLVEDM (81 aa)) are lipid-binding and lipoprotein association. O-linked (GalNAc...) threonine glycosylation is present at T211. Position 228-235 (228-235 (RQKLHGRL)) interacts with heparin. The tract at residues 265-316 (SQIRLQAEAFQARLRSWFEPLVEDMQRQWAGLVEKVQLALHLSPTSPPSENH) is homooligomerization. The tract at residues 277–289 (RLRSWFEPLVEDM) is specificity for association with VLDL.

It belongs to the apolipoprotein A1/A4/E family. Homotetramer. May interact with ABCA1; functionally associated with ABCA1 in the biogenesis of HDLs. May interact with APP/A4 amyloid-beta peptide; the interaction is extremely stable in vitro but its physiological significance is unclear. May interact with MAPT. May interact with MAP2. In the cerebrospinal fluid, interacts with secreted SORL1. Interacts with PMEL; this allows the loading of PMEL luminal fragment on ILVs to induce fibril nucleation. APOE exists as multiple glycosylated and sialylated glycoforms within cells and in plasma. The extent of glycosylation and sialylation are tissue and context specific. Post-translationally, glycated in plasma VLDL. In terms of processing, phosphorylated by FAM20C in the extracellular medium.

It localises to the secreted. The protein localises to the extracellular space. It is found in the extracellular matrix. The protein resides in the extracellular vesicle. Its subcellular location is the endosome. It localises to the multivesicular body. Its function is as follows. APOE is an apolipoprotein, a protein associating with lipid particles, that mainly functions in lipoprotein-mediated lipid transport between organs via the plasma and interstitial fluids. APOE is a core component of plasma lipoproteins and is involved in their production, conversion and clearance. Apolipoproteins are amphipathic molecules that interact both with lipids of the lipoprotein particle core and the aqueous environment of the plasma. As such, APOE associates with chylomicrons, chylomicron remnants, very low density lipoproteins (VLDL) and intermediate density lipoproteins (IDL) but shows a preferential binding to high-density lipoproteins (HDL). It also binds a wide range of cellular receptors including the LDL receptor/LDLR and the very low-density lipoprotein receptor/VLDLR that mediate the cellular uptake of the APOE-containing lipoprotein particles. Finally, APOE also has a heparin-binding activity and binds heparan-sulfate proteoglycans on the surface of cells, a property that supports the capture and the receptor-mediated uptake of APOE-containing lipoproteins by cells. The protein is Apolipoprotein E (APOE) of Ovis aries musimon (Mouflon).